The chain runs to 210 residues: Meiotic coiled-coil protein 7 (210 aa).

Positions 77–148 form a coiled coil; sequence KRSRESVLGS…LKTQLSNLNH (72 aa).

It belongs to the MND1 family. In terms of assembly, interacts with meu13.

It localises to the cytoplasm. The protein localises to the nucleus. Its function is as follows. Required for meiotic recombination. The protein is Meiotic coiled-coil protein 7 (mcp7) of Schizosaccharomyces pombe (strain 972 / ATCC 24843) (Fission yeast).